Here is a 233-residue protein sequence, read N- to C-terminus: Orotidine 5'-phosphate decarboxylase (233 aa).

Substrate contacts are provided by residues Asp-9, Lys-31, 58–67, Thr-120, Arg-182, Gln-191, Gly-211, and Arg-212; that span reads DLKLHDIPNT. The Proton donor role is filled by Lys-60.

This sequence belongs to the OMP decarboxylase family. Type 1 subfamily. Homodimer.

The catalysed reaction is orotidine 5'-phosphate + H(+) = UMP + CO2. It functions in the pathway pyrimidine metabolism; UMP biosynthesis via de novo pathway; UMP from orotate: step 2/2. Catalyzes the decarboxylation of orotidine 5'-monophosphate (OMP) to uridine 5'-monophosphate (UMP). The protein is Orotidine 5'-phosphate decarboxylase of Listeria welshimeri serovar 6b (strain ATCC 35897 / DSM 20650 / CCUG 15529 / CIP 8149 / NCTC 11857 / SLCC 5334 / V8).